Consider the following 295-residue polypeptide: 33 kDa chaperonin (295 aa).

Disulfide bonds link C233/C235 and C267/C270.

The protein belongs to the HSP33 family. In terms of processing, under oxidizing conditions two disulfide bonds are formed involving the reactive cysteines. Under reducing conditions zinc is bound to the reactive cysteines and the protein is inactive.

It localises to the cytoplasm. In terms of biological role, redox regulated molecular chaperone. Protects both thermally unfolding and oxidatively damaged proteins from irreversible aggregation. Plays an important role in the bacterial defense system toward oxidative stress. The polypeptide is 33 kDa chaperonin (Mannheimia succiniciproducens (strain KCTC 0769BP / MBEL55E)).